Here is a 352-residue protein sequence, read N- to C-terminus: tRNA pseudouridine synthase D (352 aa).

Aspartate 81 functions as the Nucleophile in the catalytic mechanism. In terms of domain architecture, TRUD spans glycine 158–lysine 306.

It belongs to the pseudouridine synthase TruD family.

It carries out the reaction uridine(13) in tRNA = pseudouridine(13) in tRNA. Functionally, responsible for synthesis of pseudouridine from uracil-13 in transfer RNAs. The polypeptide is tRNA pseudouridine synthase D (Photobacterium profundum (strain SS9)).